Consider the following 474-residue polypeptide: Proline--tRNA ligase (474 aa).

It belongs to the class-II aminoacyl-tRNA synthetase family. ProS type 3 subfamily. In terms of assembly, homodimer.

It localises to the cytoplasm. It catalyses the reaction tRNA(Pro) + L-proline + ATP = L-prolyl-tRNA(Pro) + AMP + diphosphate. Its function is as follows. Catalyzes the attachment of proline to tRNA(Pro) in a two-step reaction: proline is first activated by ATP to form Pro-AMP and then transferred to the acceptor end of tRNA(Pro). This Aster yellows witches'-broom phytoplasma (strain AYWB) protein is Proline--tRNA ligase.